The primary structure comprises 2549 residues: Serine/threonine-protein kinase mTOR (2549 aa).

An N-acetylmethionine modification is found at M1. The tract at residues 1–651 is interaction with NBN; it reads MLGTGPAVAT…HVVSQTAVQV (651 aa). HEAT repeat units lie at residues 16 to 53, 55 to 99, 100 to 137, 138 to 179, 180 to 220, 222 to 276, 277 to 313, 314 to 364, 365 to 409, 410 to 445, 446 to 494, 495 to 529, 530 to 563, 564 to 596, 597 to 636, 637 to 683, 686 to 724, 727 to 766, 769 to 811, 814 to 853, 857 to 893, 894 to 942, 943 to 988, 989 to 1027, 1029 to 1068, 1069 to 1105, 1106 to 1144, 1145 to 1188, 1189 to 1225, 1226 to 1273, 1274 to 1311, and 1312 to 1345; these read SSNV…MELR, MSQE…VEGG, NSTR…AMAG, DTFT…AISV, PTFF…LILT, QREP…RISS, MEGE…PRHI, TPFT…CCRD, LMEE…AFTD, TQYL…VAVR, SEFK…RAMG, PGIQ…RQIP, QLKK…GLAH, QLAS…EFEG, HSLT…SIHL, ISGH…DERF, HLAQ…MNPA, MPFL…NAPR, RPYM…VSGL, RKWV…STGY, PYRK…LLGA, LDPY…GNLP, LDEF…KCVQ, FLPQ…KSHI, PYMD…GEFK, LYLP…LFGA, NLDD…RLTE, SLDF…GKKY, QIFI…LADE, EEDP…GAAR, RVSK…QAYN, and PMAR…ELAL. S567 carries the phosphoserine modification. T1162 is modified (phosphothreonine). An N6-acetyllysine modification is found at K1218. S1261 carries the post-translational modification Phosphoserine. TPR repeat units lie at residues 1346 to 1382, 1383 to 1408, 1409 to 1442, 1443 to 1473, 1474 to 1507, 1508 to 1541, 1542 to 1574, 1575 to 1614, 1615 to 1649, 1650 to 1693, 1694 to 1731, 1732 to 1786, 1787 to 1846, 1898 to 1930, 1931 to 1970, and 1971 to 2005; these read TSQD…GIVL, LGER…QKGP, TPAI…HFGE, LEIQ…NKED, PELM…VNDE, TQAK…RDTH, DGAF…LDAE, LTAM…RREI, IRQI…PHED, MRTW…PTAH, PQVT…AQHA, IATE…DRSW, YKAW…STEG, NNLQ…VKAI, QIDT…YHPQ, and ALIY…SNTL. Positions 1382 to 1982 constitute an FAT domain; sequence LLGERAAKCR…IYPLTVASKS (601 aa). 1D-myo-inositol hexakisphosphate is bound by residues K1662, K1702, and R1749. Residues 1825–1860 show a composition bias toward low complexity; it reads ITNATTAATTAASAAAATSTEGSNSESEAESNENSP. The segment at 1825 to 1867 is disordered; that stretch reads ITNATTAATTAASAAAATSTEGSNSESEAESNENSPTPSPLQK. The sufficient for interaction with the FKBP1A/rapamycin complex stretch occupies residues 2012 to 2144; that stretch reads VSEELIRVAI…DLELAVPGTY (133 aa). A Glycyl lysine isopeptide (Lys-Gly) (interchain with G-Cter in ubiquitin) cross-link involves residue K2066. Residues 2156–2469 enclose the PI3K/PI4K catalytic domain; the sequence is IAPSLQVITS…GVELGEPAHK (314 aa). Residue S2159 is modified to Phosphoserine; by TBK1. Positions 2162 to 2168 are G-loop; it reads VITSKQR. A Phosphothreonine modification is found at T2164. ATP-binding residues include S2165 and Q2167. At T2173 the chain carries Phosphothreonine; by PKB/AKT1. L2185, K2187, E2190, Y2225, G2238, W2239, V2240, and T2245 together coordinate ATP. The interaction with MLST8 stretch occupies residues 2258-2296; it reads KILLNIEHRIMLRMAPDYDHLTLMQKVEVFEHAVNNTAG. Residues 2335-2343 form a catalytic loop region; sequence GLGDRHPSN. N2343 is a Mg(2+) binding site. ATP-binding residues include M2345 and I2356. The interval 2355–2380 is activation loop; the sequence is HIDFGDCFEVAMTREKFPEKIPFRLT. D2357 contacts Mg(2+). The residue at position 2446 (T2446) is a Phosphothreonine; by RPS6KB1. The residue at position 2448 (S2448) is a Phosphoserine; by RPS6KB1. S2478 and S2481 each carry phosphoserine. The FATC domain maps to 2517 to 2549; it reads DTLDVPTQVELLIKQATSHENLCQCYIGWCPFW.

This sequence belongs to the PI3/PI4-kinase family. Part of the mechanistic target of rapamycin complex 1 (mTORC1) which contains MTOR, MLST8 and RPTOR. The mTORC1 complex is a 1 Md obligate dimer of two stoichiometric heterotetramers with overall dimensions of 290 A x 210 A x 135 A. It has a rhomboid shape and a central cavity, the dimeric interfaces are formed by interlocking interactions between the two MTOR and the two RPTOR subunits. The MLST8 subunit forms distal foot-like protuberances, and contacts only one MTOR within the complex, while the small AKT1S1/PRAS40 localizes to the midsection of the central core, in close proximity to RPTOR. mTORC1 associates with AKT1S1/PRAS40, which inhibits its activity by blocking MTOR substrate-recruitment site. Component of the mechanistic target of rapamycin complex 2 (mTORC2), consisting in two heterotretramers composed of MTOR, MLST8, RICTOR and MAPKAP1/SIN1. Interacts with PLPP7 and PML. Interacts with PRR5 and RICTOR; the interaction is direct within the mTORC2 complex and interaction with RICTOR is enhanced by deubiquitination of RICTOR by USP9X. mTORC1 and mTORC2 associate with DEPTOR, which regulates their activity. Interacts with WAC; WAC positively regulates MTOR activity by promoting the assembly of the TTT complex composed of TELO2, TTI1 and TTI2 and the RUVBL complex composed of RUVBL1 and RUVBL2 into the TTT-RUVBL complex which leads to the dimerization of the mTORC1 complex and its subsequent activation. Interacts with UBQLN1. Interacts with TTI1 and TELO2. Interacts with CLIP1; phosphorylates and regulates CLIP1. Interacts with NBN. Interacts with HTR6. Interacts with BRAT1. Interacts with MEAK7 (via C-terminal domain); the interaction increases upon nutrient stimulation. Interacts with TM4SF5; the interaction is positively regulated by arginine and is negatively regulated by leucine. Interacts with GPR137B. Interacts with NCKAP1L. Interacts with TPCN1 and TPCN2; the interaction is required for TPCN1 and TPCN2 sensitivity to ATP. Interacts with ATP6V1A and with CRYAB, forming a ternary complex. Interacts with SLC38A7; this interaction mediates the recruitment of mTORC1 to the lysosome and its subsequent activation. Interacts with TSPAN8. Post-translationally, autophosphorylates when part of mTORC1 or mTORC2. Phosphorylation at Ser-1261, Ser-2159 and Thr-2164 promotes autophosphorylation. Phosphorylated at Ser-2448 by RPS6KB1. Phosphorylation in the kinase domain modulates the interactions of MTOR with RPTOR and AKT1S1/PRAS40 and leads to increased intrinsic mTORC1 kinase activity. Phosphorylation at Ser-2159 by TBK1 in response to growth factors and pathogen recognition receptors promotes mTORC1 activity. Phosphorylation at Ser-2159 by TBK1 in response to EGF growth factor promotes mTORC2 activity, leading to AKT1 phosphorylation and activation. Phosphorylation at Thr-2173 in the ATP-binding region by AKT1 strongly reduces kinase activity. In terms of processing, ubiquitinated at Lys-2066 by the SCF(FBXO22) complex via 'Lys-27'-linked ubiquitination prevents mTORC1 substrate recruitment.

The protein localises to the lysosome membrane. It is found in the endoplasmic reticulum membrane. Its subcellular location is the golgi apparatus membrane. It localises to the cell membrane. The protein resides in the mitochondrion outer membrane. The protein localises to the cytoplasm. It is found in the nucleus. Its subcellular location is the PML body. It localises to the microsome membrane. The protein resides in the cytoplasmic vesicle. The protein localises to the phagosome. The catalysed reaction is L-seryl-[protein] + ATP = O-phospho-L-seryl-[protein] + ADP + H(+). The enzyme catalyses L-threonyl-[protein] + ATP = O-phospho-L-threonyl-[protein] + ADP + H(+). It catalyses the reaction L-tyrosyl-[protein] + ATP = O-phospho-L-tyrosyl-[protein] + ADP + H(+). With respect to regulation, the mTORC1 complex is activated in response to nutrients, growth factors or amino acids: activation requires relocalization of the mTORC1 complex to lysosomes that is mediated by the Ragulator complex, SLC38A9, and the Rag GTPases RagA/RRAGA, RagB/RRAGB, RagC/RRAGC and RagD/RRAGD. Activation of mTORC1 by growth factors such as insulin involves AKT1-mediated phosphorylation of TSC1-TSC2, which leads to the activation of the RHEB GTPase a potent activator of the protein kinase activity of mTORC1. Insulin-stimulated and amino acid-dependent phosphorylation at Ser-1261 promotes autophosphorylation and the activation of mTORC1. On the other hand, low cellular energy levels can inhibit mTORC1 through activation of PRKAA1 while hypoxia inhibits mTORC1 through a REDD1-dependent mechanism which may also require PRKAA1. The kinase activity of MTOR within the mTORC1 complex is positively regulated by MLST8. The kinase activity of MTOR is inhibited by DEPTOR and AKT1S1. The non-canonical mTORC1 complex is independent of the RHEB GTPase and specifically mediates phosphorylation of MiT/TFE factors TFEB and TFE3 but not other mTORC1 substrates: it is activated by FLCN, which activates Rag GTPases RagC/RRAGC and RagD/RRAGD. MTOR is the target of the immunosuppressive and anti-cancer drug rapamycin which acts in complex with FKBP1A/FKBP12, and specifically inhibits its kinase activity. mTORC2 is also activated by growth factors, but seems to be nutrient-insensitive. mTORC2 associates and is directly activated by ribosomes. mTORC2 may also be regulated by RHEB but in an indirect manner through the PI3K signaling pathway. In terms of biological role, serine/threonine protein kinase which is a central regulator of cellular metabolism, growth and survival in response to hormones, growth factors, nutrients, energy and stress signals. MTOR directly or indirectly regulates the phosphorylation of at least 800 proteins. Functions as part of 2 structurally and functionally distinct signaling complexes mTORC1 and mTORC2 (mTOR complex 1 and 2). In response to nutrients, growth factors or amino acids, mTORC1 is recruited to the lysosome membrane and promotes protein, lipid and nucleotide synthesis by phosphorylating key regulators of mRNA translation and ribosome synthesis. This includes phosphorylation of EIF4EBP1 and release of its inhibition toward the elongation initiation factor 4E (eiF4E). Moreover, phosphorylates and activates RPS6KB1 and RPS6KB2 that promote protein synthesis by modulating the activity of their downstream targets including ribosomal protein S6, eukaryotic translation initiation factor EIF4B, and the inhibitor of translation initiation PDCD4. Stimulates the pyrimidine biosynthesis pathway, both by acute regulation through RPS6KB1-mediated phosphorylation of the biosynthetic enzyme CAD, and delayed regulation, through transcriptional enhancement of the pentose phosphate pathway which produces 5-phosphoribosyl-1-pyrophosphate (PRPP), an allosteric activator of CAD at a later step in synthesis, this function is dependent on the mTORC1 complex. Regulates ribosome synthesis by activating RNA polymerase III-dependent transcription through phosphorylation and inhibition of MAF1 an RNA polymerase III-repressor. Activates dormant ribosomes by mediating phosphorylation of SERBP1, leading to SERBP1 inactivation and reactivation of translation. In parallel to protein synthesis, also regulates lipid synthesis through SREBF1/SREBP1 and LPIN1. To maintain energy homeostasis mTORC1 may also regulate mitochondrial biogenesis through regulation of PPARGC1A. In the same time, mTORC1 inhibits catabolic pathways: negatively regulates autophagy through phosphorylation of ULK1. Under nutrient sufficiency, phosphorylates ULK1 at 'Ser-758', disrupting the interaction with AMPK and preventing activation of ULK1. Also prevents autophagy through phosphorylation of the autophagy inhibitor DAP. Also prevents autophagy by phosphorylating RUBCNL/Pacer under nutrient-rich conditions. Prevents autophagy by mediating phosphorylation of AMBRA1, thereby inhibiting AMBRA1 ability to mediate ubiquitination of ULK1 and interaction between AMBRA1 and PPP2CA. mTORC1 exerts a feedback control on upstream growth factor signaling that includes phosphorylation and activation of GRB10 a INSR-dependent signaling suppressor. Among other potential targets mTORC1 may phosphorylate CLIP1 and regulate microtubules. The mTORC1 complex is inhibited in response to starvation and amino acid depletion. The non-canonical mTORC1 complex, which acts independently of RHEB, specifically mediates phosphorylation of MiT/TFE factors TFEB and TFE3 in the presence of nutrients, promoting their cytosolic retention and inactivation. Upon starvation or lysosomal stress, inhibition of mTORC1 induces dephosphorylation and nuclear translocation of TFEB and TFE3, promoting their transcription factor activity. The mTORC1 complex regulates pyroptosis in macrophages by promoting GSDMD oligomerization. MTOR phosphorylates RPTOR which in turn inhibits mTORC1. As part of the mTORC2 complex, MTOR transduces signals from growth factors to pathways involved in proliferation, cytoskeletal organization, lipogenesis and anabolic output. In response to growth factors, mTORC2 phosphorylates and activates AGC protein kinase family members, including AKT (AKT1, AKT2 and AKT3), PKC (PRKCA, PRKCB and PRKCE) and SGK1. In contrast to mTORC1, mTORC2 is nutrient-insensitive. mTORC2 plays a critical role in AKT1 activation by mediating phosphorylation of different sites depending on the context, such as 'Thr-450', 'Ser-473', 'Ser-477' or 'Thr-479', facilitating the phosphorylation of the activation loop of AKT1 on 'Thr-308' by PDPK1/PDK1 which is a prerequisite for full activation. mTORC2 also regulates the phosphorylation of SGK1 at 'Ser-422'. mTORC2 may regulate the actin cytoskeleton, through phosphorylation of PRKCA, PXN and activation of the Rho-type guanine nucleotide exchange factors RHOA and RAC1A or RAC1B. The mTORC2 complex also phosphorylates various proteins involved in insulin signaling, such as FBXW8 and IGF2BP1. May also regulate insulin signaling by acting as a tyrosine protein kinase that catalyzes phosphorylation of IGF1R and INSR. Regulates osteoclastogenesis by adjusting the expression of CEBPB isoforms. Plays an important regulatory role in the circadian clock function; regulates period length and rhythm amplitude of the suprachiasmatic nucleus (SCN) and liver clocks. This is Serine/threonine-protein kinase mTOR from Mus musculus (Mouse).